A 535-amino-acid polypeptide reads, in one-letter code: Reticuline oxidase (535 aa).

Positions 1 to 23 are cleaved as a signal peptide; sequence MMCRSLTLRFFLFIVLLQTCVRG. N-linked (GlcNAc...) asparagine glycosylation occurs at Asn42. Positions 71 to 245 constitute an FAD-binding PCMH-type domain; it reads TVSKPSFIVM…YAWKIKLLPV (175 aa). A cross-link (6-(S-cysteinyl)-8alpha-(pros-histidyl)-FAD (His-Cys)) is located at residues 108 to 170; sequence HSYEGLSYTA…DTLGFTAGWC (63 aa). Asn475 carries an N-linked (GlcNAc...) asparagine glycan.

It belongs to the oxygen-dependent FAD-linked oxidoreductase family. The cofactor is FAD. Requires a metal cation as cofactor. In terms of processing, the FAD cofactor is bound via a bicovalent 6-S-cysteinyl, 8alpha-N1-histidyl FAD linkage. As to expression, expressed in roots and stems. Not detected in leaves or reproductive organs. Restricted to the parietal region of sieve elements adjacent or proximal to laticifers.

The protein localises to the cytoplasmic vesicle. The enzyme catalyses (S)-reticuline + O2 = (S)-scoulerine + H2O2 + H(+). The protein operates within alkaloid biosynthesis; (S)-scoulerine biosynthesis; (S)-scoulerine from (S)-reticuline: step 1/1. Its function is as follows. Oxygen-dependent FAD-dependent oxidoreductase essential to the formation of benzophenanthridine alkaloids in the response of plants to pathogenic attack. Catalyzes the stereospecific conversion of the N-methyl moiety of (S)-reticuline into the berberine bridge carbon of (S)-scoulerine. Involved in the biosynthesis of sanguinarine. The chain is Reticuline oxidase (BBE1) from Papaver somniferum (Opium poppy).